A 371-amino-acid chain; its full sequence is DNA replication and repair protein RecF (371 aa).

30–37 serves as a coordination point for ATP; that stretch reads GANAQGKT.

The protein belongs to the RecF family.

The protein resides in the cytoplasm. The RecF protein is involved in DNA metabolism; it is required for DNA replication and normal SOS inducibility. RecF binds preferentially to single-stranded, linear DNA. It also seems to bind ATP. In Lacticaseibacillus paracasei (strain ATCC 334 / BCRC 17002 / CCUG 31169 / CIP 107868 / KCTC 3260 / NRRL B-441) (Lactobacillus paracasei), this protein is DNA replication and repair protein RecF.